The sequence spans 949 residues: Collagen alpha-2(I) chain (949 aa).

Residues 1–949 (SGGFDFSFLP…FGYEGDFYRA (949 aa)) form a disordered region. Pro-10, Pro-13, Pro-34, and Pro-40 each carry 4-hydroxyproline. Residues 27–66 (LMGPRGPPGASGAPGPQGFQGPAGEPGEPGQTGPAGARGP) show a composition bias toward low complexity. Lys-95 is modified (5-hydroxylysine; alternate). The O-linked (Gal...) hydroxylysine; alternate glycan is linked to Lys-95. Composition is skewed to low complexity over residues 147-162 (SVGP…SAGP) and 208-229 (PGAN…AGAP). The span at 263–272 (GESGGKGEPG) shows a compositional bias: gly residues. A compositionally biased stretch (low complexity) spans 273-283 (SAGPQGPPGSS). The span at 292–313 (NGEGSTGPTGPPGLRGGPGSRG) shows a compositional bias: gly residues. 4-hydroxyproline is present on residues Pro-348 and Pro-351. The span at 377–396 (LPGIDGRPGPIGPAGARGEA) shows a compositional bias: low complexity. Residues 435–444 (GVQGGKGEQG) are compositionally biased toward gly residues. 2 stretches are compositionally biased toward low complexity: residues 490 to 507 (PGES…SRGP) and 519 to 529 (EPGVVGAPGTA). Residues 530–539 (GPAGSGGLPG) are compositionally biased toward gly residues. 2 stretches are compositionally biased toward low complexity: residues 562 to 606 (VGTT…PRGS) and 613 to 633 (VGPA…QPGA). Residues 634-643 (KGERGTKGPK) show a composition bias toward basic and acidic residues. Residues 651-661 (PTGPVGSAGPA) show a composition bias toward low complexity. Residues 671–680 (GSRGDGGPPG) show a composition bias toward gly residues. Low complexity predominate over residues 682-691 (TGFPGAAGRT). Residues 722–736 (GPVGRGETGAGGPPG) show a composition bias toward gly residues. 3 stretches are compositionally biased toward low complexity: residues 737 to 771 (FTGE…LGLP), 779 to 792 (LPGV…PGPL), and 810 to 825 (EPGP…ALGP). Basic and acidic residues predominate over residues 835-846 (RGDKGEPGEKGP). Residues 921–931 (PAGPPGPPGPP) are compositionally biased toward pro residues.

This sequence belongs to the fibrillar collagen family. In terms of assembly, trimers of one alpha 2(I) and two alpha 1(I) chains. Interacts (via C-terminus) with TMEM131 (via PapD-L domain); the interaction is direct and is involved in assembly and TRAPPIII ER-to-Golgi transport complex-dependent secretion of collagen. Prolines at the third position of the tripeptide repeating unit (G-X-Y) are hydroxylated in some or all of the chains. As to expression, expressed in bones.

The protein localises to the secreted. It is found in the extracellular space. Its subcellular location is the extracellular matrix. Type I collagen is a member of group I collagen (fibrillar forming collagen). In Acratocnus ye (Hispaniolan ground sloth), this protein is Collagen alpha-2(I) chain.